The chain runs to 388 residues: F-box/LRR-repeat protein At3g59190 (388 aa).

An F-box domain is found at 11 to 64; sequence KDIISNLPDALLCHVLSFLPTTEAASTSVLAKRWRFLLAFVPNLDLDNMIYDRP. LRR repeat units lie at residues 151 to 177, 180 to 205, 228 to 252, 313 to 345, and 346 to 371; these read KVSG…HLSA, FGDE…VMIK, CENI…EFTD, TMYL…TVET, and DERV…IFEV.

This chain is F-box/LRR-repeat protein At3g59190, found in Arabidopsis thaliana (Mouse-ear cress).